Reading from the N-terminus, the 393-residue chain is Arginine biosynthesis bifunctional protein ArgJ (393 aa).

Positions 145, 171, 182, 265, 388, and 393 each coordinate substrate. The Nucleophile role is filled by T182.

The protein belongs to the ArgJ family. Heterotetramer of two alpha and two beta chains.

It is found in the cytoplasm. The enzyme catalyses N(2)-acetyl-L-ornithine + L-glutamate = N-acetyl-L-glutamate + L-ornithine. The catalysed reaction is L-glutamate + acetyl-CoA = N-acetyl-L-glutamate + CoA + H(+). The protein operates within amino-acid biosynthesis; L-arginine biosynthesis; L-ornithine and N-acetyl-L-glutamate from L-glutamate and N(2)-acetyl-L-ornithine (cyclic): step 1/1. It participates in amino-acid biosynthesis; L-arginine biosynthesis; N(2)-acetyl-L-ornithine from L-glutamate: step 1/4. Catalyzes two activities which are involved in the cyclic version of arginine biosynthesis: the synthesis of N-acetylglutamate from glutamate and acetyl-CoA as the acetyl donor, and of ornithine by transacetylation between N(2)-acetylornithine and glutamate. The protein is Arginine biosynthesis bifunctional protein ArgJ of Nitratidesulfovibrio vulgaris (strain ATCC 29579 / DSM 644 / CCUG 34227 / NCIMB 8303 / VKM B-1760 / Hildenborough) (Desulfovibrio vulgaris).